Consider the following 205-residue polypeptide: Isochorismatase domain-containing protein 2 (205 aa).

2 positions are modified to phosphoserine: serine 7 and serine 202.

It belongs to the isochorismatase family. As to quaternary structure, interacts with CDKN2A.

It is found in the cytoplasm. The protein resides in the nucleus. The chain is Isochorismatase domain-containing protein 2 (ISOC2) from Pongo abelii (Sumatran orangutan).